Reading from the N-terminus, the 529-residue chain is AT hook-containing protein attf-4 (529 aa).

Disordered regions lie at residues 1–39 (MLQPPTLTPNANGEEFRGSVSTDRSSASPSNIDEIMEDD), 131–158 (QVVHKDQQNGSSFLPSANKTSENPKPIE), 173–200 (GGGGGKIHTERLSEPARKQSRKVGFPPP), and 233–255 (VSANTSTASPGPSSEGSGDDHLE). 2 stretches are compositionally biased toward polar residues: residues 19–31 (SVSTDRSSASPSN) and 138–153 (QNGSSFLPSANKTSEN). Residues 179-189 (IHTERLSEPAR) show a composition bias toward basic and acidic residues. Residues 233 to 248 (VSANTSTASPGPSSEG) are compositionally biased toward low complexity. Residues 307–319 (GRGRGRPKLIGDE) constitute a DNA-binding region (a.T hook). Residues 436–476 (LEGGSPPASSSSTATTSTATKTVKQESKNGHQNEENLNVKQ) are disordered. Positions 443 to 455 (ASSSSTATTSTAT) are enriched in low complexity. Residues 458-469 (VKQESKNGHQNE) are compositionally biased toward basic and acidic residues.

The chain is AT hook-containing protein attf-4 from Caenorhabditis elegans.